We begin with the raw amino-acid sequence, 778 residues long: Tubulin polyglutamylase ttll6 (778 aa).

Residues 1–43 (MGTPAERSVSEVCRCEPDPGLEGEGWGSDTHAEPSNTPIPLPV) are disordered. The TTL domain occupies 51-393 (KKKLWINLTN…LGACDRRKIT (343 aa)). ATP-binding positions include K168, 174 to 175 (QG), 196 to 199 (QVYM), and 209 to 211 (KFD). Q174 lines the a protein pocket. R235 serves as a coordination point for L-glutamate. 257–258 (TN) contributes to the ATP binding site. Y259 and K277 together coordinate L-glutamate. Residues D340, E353, and N355 each contribute to the Mg(2+) site. An a protein-binding site is contributed by H356. Residues 365–445 (RLDREVKDSL…MGGFRRIFPR (81 aa)) form a c-MTBD region region. Residue K371 participates in L-glutamate binding. 4 stretches are compositionally biased toward basic and acidic residues: residues 402–418 (ERLQQNRSREARNEEPR), 485–510 (KQEQKERDKKGSRKQDLQGESAGEKV), 533–542 (SVREETPVSL), and 760–778 (LSHDLRKAPRRVLPHEHSL). 3 disordered regions span residues 402–422 (ERLQQNRSREARNEEPRQSQA), 485–542 (KQEQ…PVSL), and 758–778 (PHLSHDLRKAPRRVLPHEHSL).

Belongs to the tubulin--tyrosine ligase family. Mg(2+) is required as a cofactor.

The protein localises to the cytoplasm. Its subcellular location is the cytoskeleton. It localises to the cilium axoneme. It is found in the cilium basal body. The catalysed reaction is L-glutamyl-[protein] + L-glutamate + ATP = gamma-L-glutamyl-L-glutamyl-[protein] + ADP + phosphate + H(+). It catalyses the reaction (L-glutamyl)(n)-gamma-L-glutamyl-L-glutamyl-[protein] + L-glutamate + ATP = (L-glutamyl)(n+1)-gamma-L-glutamyl-L-glutamyl-[protein] + ADP + phosphate + H(+). In terms of biological role, polyglutamylase which modifies both tubulin and non-tubulin proteins, generating alpha-linked polyglutamate side chains on the gamma-carboxyl group of specific glutamate residues of target proteins. Preferentially mediates ATP-dependent long polyglutamate chain elongation over the initiation step of the polyglutamylation reaction. Preferentially modifies the alpha-tubulin tail over a beta-tail. Mediates microtubule polyglutamylation in cilia axoneme, which is important for ciliary structural formation and motility. Polyglutamylates olfactory cilia, necessary for the regulation of ciliary structure and beating. In Danio rerio (Zebrafish), this protein is Tubulin polyglutamylase ttll6.